The following is a 146-amino-acid chain: UPF0178 protein BC_3040 (146 aa).

It belongs to the UPF0178 family.

This Bacillus cereus (strain ATCC 14579 / DSM 31 / CCUG 7414 / JCM 2152 / NBRC 15305 / NCIMB 9373 / NCTC 2599 / NRRL B-3711) protein is UPF0178 protein BC_3040.